The sequence spans 113 residues: Protein translation factor SUI1 homolog (113 aa).

This sequence belongs to the SUI1 family.

In terms of biological role, probably involved in translation. The protein is Protein translation factor SUI1 homolog of Spuriopimpinella brachycarpa (Chamnamul).